Reading from the N-terminus, the 314-residue chain is MKNKSMEIEFILLGLTDDPQLQIVIFLFLFLNYTLSLMGNLIIIILTLLDPRLKTPMYFFLRNFSFLEVIFTTVCIPRFLITIVTRDKTISYNNCATQLFFILLPGVTEFYLLAAMSYDRYVAICKPLHYPIIMSSKVCYQLVLSSWVTGFLIIFPPLVMGLKLDFCASKTIDHFMCETSPILQISCTDTHVLELMSFTLAVVTLVVTLVLVILSYTCIIKTILKFSSAQQRNKAFSTCTSHMIVVSMTYGSCIFMYIKPSAKERVTVSKGVALLYTSIAPLLNPFIYTLRNQQVKEVFWDVLQKNLCFSKRPF.

The Extracellular segment spans residues 1-24 (MKNKSMEIEFILLGLTDDPQLQIV). Asparagine 3 is a glycosylation site (N-linked (GlcNAc...) asparagine). The chain crosses the membrane as a helical span at residues 25–45 (IFLFLFLNYTLSLMGNLIIII). Topologically, residues 46–63 (LTLLDPRLKTPMYFFLRN) are cytoplasmic. A helical membrane pass occupies residues 64-84 (FSFLEVIFTTVCIPRFLITIV). Residues 85 to 95 (TRDKTISYNNC) lie on the Extracellular side of the membrane. Cysteines 95 and 177 form a disulfide. The helical transmembrane segment at 96 to 116 (ATQLFFILLPGVTEFYLLAAM) threads the bilayer. Over 117 to 141 (SYDRYVAICKPLHYPIIMSSKVCYQ) the chain is Cytoplasmic. The helical transmembrane segment at 142–162 (LVLSSWVTGFLIIFPPLVMGL) threads the bilayer. Residues 163–199 (KLDFCASKTIDHFMCETSPILQISCTDTHVLELMSFT) are Extracellular-facing. A helical transmembrane segment spans residues 200–220 (LAVVTLVVTLVLVILSYTCII). Over 221 to 237 (KTILKFSSAQQRNKAFS) the chain is Cytoplasmic. A helical membrane pass occupies residues 238 to 258 (TCTSHMIVVSMTYGSCIFMYI). The Extracellular segment spans residues 259–269 (KPSAKERVTVS). A helical transmembrane segment spans residues 270–290 (KGVALLYTSIAPLLNPFIYTL). Over 291-314 (RNQQVKEVFWDVLQKNLCFSKRPF) the chain is Cytoplasmic.

This sequence belongs to the G-protein coupled receptor 1 family.

Its subcellular location is the cell membrane. Functionally, odorant receptor. This chain is Olfactory receptor 6C6 (OR6C6), found in Homo sapiens (Human).